The following is a 410-amino-acid chain: Elongation factor Tu, chloroplastic (410 aa).

The tr-type G domain maps to 10 to 214 (KPHINIGTIG…QVDKYIPTPQ (205 aa)). Residues 19 to 26 (GHVDHGKT) form a G1 region. 19-26 (GHVDHGKT) contacts GTP. Thr26 contributes to the Mg(2+) binding site. The segment at 60–64 (GITIN) is G2. Positions 81 to 84 (DCPG) are G3. Residues 81–85 (DCPGH) and 136–139 (NKED) each bind GTP. Residues 136–139 (NKED) form a G4 region. The interval 174-176 (SAL) is G5.

The protein belongs to the TRAFAC class translation factor GTPase superfamily. Classic translation factor GTPase family. EF-Tu/EF-1A subfamily.

It is found in the plastid. The protein resides in the chloroplast. It carries out the reaction GTP + H2O = GDP + phosphate + H(+). Functionally, GTP hydrolase that promotes the GTP-dependent binding of aminoacyl-tRNA to the A-site of ribosomes during protein biosynthesis. This is Elongation factor Tu, chloroplastic (tufA) from Mesostigma viride (Green alga).